The chain runs to 207 residues: ATP-dependent dethiobiotin synthetase BioD (207 aa).

Asp-11 to Phe-16 lines the ATP pocket. A Mg(2+)-binding site is contributed by Thr-15. The active site involves Lys-31. Ser-35 is a binding site for substrate. Residues Asp-42, Glu-95–Gly-98, and Asn-155–Gln-156 contribute to the ATP site. Mg(2+)-binding residues include Asp-42 and Glu-95.

Belongs to the dethiobiotin synthetase family. Homodimer. It depends on Mg(2+) as a cofactor.

The protein resides in the cytoplasm. The enzyme catalyses (7R,8S)-7,8-diammoniononanoate + CO2 + ATP = (4R,5S)-dethiobiotin + ADP + phosphate + 3 H(+). It participates in cofactor biosynthesis; biotin biosynthesis; biotin from 7,8-diaminononanoate: step 1/2. Functionally, catalyzes a mechanistically unusual reaction, the ATP-dependent insertion of CO2 between the N7 and N8 nitrogen atoms of 7,8-diaminopelargonic acid (DAPA, also called 7,8-diammoniononanoate) to form a ureido ring. The protein is ATP-dependent dethiobiotin synthetase BioD of Chlamydia abortus (strain DSM 27085 / S26/3) (Chlamydophila abortus).